The primary structure comprises 897 residues: MEANHCSLGVYPSYPDLVIDVGEVTLGEENRKKLQKTQRDQERARVIRAACALLNSGGGVIQMEMANRDERPTEMGLDLEESLRKLIQYPYLQAFFETKQHGRCFYIFVKSWSGDPFLKDGSFNSRICSLSSSLYCRSGTSVLHMNSRQAFDFLKTKERQSKYNLINEGSPPSKIMKAVYQNISESNPAYEVFQTDTIEYGEILSFPESPSIEFKQFSTKHIQQYVENIIPEYISAFANTEGGYLFIGVDDKSRKVLGCAKEQVDPDSLKNVIARAISKLPIVHFCSSKPRVEYSTKIVEVFCGKELYGYLCVIKVKAFCCVVFSEAPKSWMVREKYIRPLTTEEWVEKMMDADPEFPPDFAEAFESQLSLSDSPSLCRPVYSKKGLEHKADLQQHLFPVPPGHLECTPESLWKELSLQHEGLKELIHKQMRPFSQGIVILSRSWAVDLNLQEKPGVICDALLIAQNSTPILYTILREQDAEGQDYCTRTAFTLKQKLVNMGGYTGKVCVRAKVLCLSPESSAEALEAAVSPMDYPASYSLAGTQHMEALLQSLVIVLLGFRSLLSDQLGCEVLNLLTAQQYEIFSRSLRKNRELFVHGLPGSGKTIMAMKIMEKIRNVFHCEAHRILYVCENQPLRNFISDRNICRAETRETFLREKFEHIQHIVIDEAQNFRTEDGDWYRKAKTITQREKDCPGVLWIFLDYFQTSHLGHSGLPPLSAQYPREELTRVVRNADEIAEYIQQEMQLIIENPPINIPHGYLAILSEAKWVPGVPGNTKIIKNFTLEQIVTYVADTCRCFFERGYSPKDVAVLVSTVTEVEQYQSKLLKAMRKKMVVQLSDACDMLGVHIVLDSVRRFSGLERSIVFGIHPRTADPAILPNILICLASRAKQHLYIFL.

The n'-domain region stretch occupies residues E2–P355. Residues E208 and E213 contribute to the active site. 3 residues coordinate Zn(2+): H284, C286, and C321. Residue G599–T606 participates in ATP binding.

Belongs to the Schlafen family. Subgroup III subfamily. It depends on Mg(2+) as a cofactor.

Its subcellular location is the cytoplasm. In terms of biological role, endoribonuclease that cleaves tRNAs and rRNAs. Cleaves tRNAs 11 nucleotides from the 3'-terminus at the acceptor stem. Does not act on tRNA(Sec). Able to restrict HIV-1 virus replication; ability to inhibit HIV-1 replication is dependent on endoribonuclease activity. The sequence is that of Schlafen family member 13 from Homo sapiens (Human).